A 478-amino-acid chain; its full sequence is ATP synthase subunit beta (478 aa).

161-168 contributes to the ATP binding site; sequence GGAGVGKT.

Belongs to the ATPase alpha/beta chains family. F-type ATPases have 2 components, CF(1) - the catalytic core - and CF(0) - the membrane proton channel. CF(1) has five subunits: alpha(3), beta(3), gamma(1), delta(1), epsilon(1). CF(0) has four main subunits: a(1), b(1), b'(1) and c(9-12).

It is found in the cell inner membrane. The catalysed reaction is ATP + H2O + 4 H(+)(in) = ADP + phosphate + 5 H(+)(out). In terms of biological role, produces ATP from ADP in the presence of a proton gradient across the membrane. The catalytic sites are hosted primarily by the beta subunits. This is ATP synthase subunit beta from Gloeobacter violaceus (strain ATCC 29082 / PCC 7421).